The chain runs to 319 residues: Lipoyl synthase (319 aa).

The interval 1-28 (MVVLVDTVSSTPVRPRHPEKAARPDALS) is disordered. A compositionally biased stretch (basic and acidic residues) spans 16–28 (RHPEKAARPDALS). [4Fe-4S] cluster contacts are provided by C61, C66, C72, C87, C91, C94, and S300. One can recognise a Radical SAM core domain in the interval 73–289 (WDKKHATFMI…AKTAYAKGFL (217 aa)).

This sequence belongs to the radical SAM superfamily. Lipoyl synthase family. The cofactor is [4Fe-4S] cluster.

The protein resides in the cytoplasm. It carries out the reaction [[Fe-S] cluster scaffold protein carrying a second [4Fe-4S](2+) cluster] + N(6)-octanoyl-L-lysyl-[protein] + 2 oxidized [2Fe-2S]-[ferredoxin] + 2 S-adenosyl-L-methionine + 4 H(+) = [[Fe-S] cluster scaffold protein] + N(6)-[(R)-dihydrolipoyl]-L-lysyl-[protein] + 4 Fe(3+) + 2 hydrogen sulfide + 2 5'-deoxyadenosine + 2 L-methionine + 2 reduced [2Fe-2S]-[ferredoxin]. The protein operates within protein modification; protein lipoylation via endogenous pathway; protein N(6)-(lipoyl)lysine from octanoyl-[acyl-carrier-protein]: step 2/2. Its function is as follows. Catalyzes the radical-mediated insertion of two sulfur atoms into the C-6 and C-8 positions of the octanoyl moiety bound to the lipoyl domains of lipoate-dependent enzymes, thereby converting the octanoylated domains into lipoylated derivatives. The sequence is that of Lipoyl synthase from Rhodopseudomonas palustris (strain HaA2).